Consider the following 805-residue polypeptide: Angiotensin-converting enzyme 2 (805 aa).

A signal peptide spans 1 to 17 (MSSSSWLLLSLVAVTTA). Topologically, residues 18 to 740 (QSLTEENAKT…LEPPYQPPVT (723 aa)) are extracellular. In terms of domain architecture, Peptidase M2 spans 19 to 607 (SLTEENAKTF…QNRNSFVGWN (589 aa)). A glycan (N-linked (GlcNAc...) asparagine) is linked at Asn-53. A disulfide bond links Cys-133 and Cys-141. Position 169 (Arg-169) interacts with chloride. Substrate contacts are provided by residues Arg-273 and 345 to 346 (HP). Cys-344 and Cys-361 form a disulfide bridge. His-374 serves as a coordination point for Zn(2+). The active-site Proton acceptor is Glu-375. His-378 and Glu-402 together coordinate Zn(2+). Chloride is bound by residues Trp-477 and Lys-481. Catalysis depends on His-505, which acts as the Proton donor. Residue Tyr-515 coordinates substrate. Cys-530 and Cys-542 form a disulfide bridge. Asn-536 and Asn-546 each carry an N-linked (GlcNAc...) asparagine glycan. The Collectrin-like domain maps to 614 to 805 (ADQSIKVRIS…QNSDDAQTSF (192 aa)). The segment at 652-659 (RKYFSIIK) is essential for cleavage by ADAM17. 2 N-linked (GlcNAc...) asparagine glycosylation sites follow: Asn-660 and Asn-690. An essential for cleavage by TMPRSS11D and TMPRSS2 region spans residues 697–716 (RSEVEDAIRMSRGRINDVFG). Residues 741–761 (IWLIIFGVVMALVVVGIIILI) traverse the membrane as a helical segment. The Cytoplasmic portion of the chain corresponds to 762 to 805 (VTGIKGRKKKNETKREENPYDSMDIGKGESNAGFQNSDDAQTSF). The segment at 771–805 (KNETKREENPYDSMDIGKGESNAGFQNSDDAQTSF) is disordered. An LIR motif is present at residues 778-786 (ENPYDSMDI). At Tyr-781 the chain carries Phosphotyrosine. Positions 781–784 (YDSM) match the Endocytic sorting signal motif. An SH2-binding motif is present at residues 781-785 (YDSMD). Ser-783 carries the post-translational modification Phosphoserine. Lys-788 participates in a covalent cross-link: Glycyl lysine isopeptide (Lys-Gly) (interchain with G-Cter in ubiquitin). The short motif at 792 to 795 (NAGF) is the PTB element. A compositionally biased stretch (polar residues) spans 793 to 805 (AGFQNSDDAQTSF). The PDZ-binding signature appears at 803-805 (TSF).

This sequence belongs to the peptidase M2 family. In terms of assembly, homodimer. Interacts with the catalytically active form of TMPRSS2. Interacts with SLC6A19; this interaction is essential for expression and function of SLC6A19 in intestine. Interacts with ITGA5:ITGB1. Probably interacts (via endocytic sorting signal motif) with AP2M1; the interaction is inhibited by phosphorylation of Tyr-781. Interacts (via PDZ-binding motif) with NHERF1 (via PDZ domains); the interaction may enhance ACE2 membrane residence. As to quaternary structure, (Microbial infection) Weakly interacts with SARS-CoV S protein. The cofactor is Zn(2+). Requires chloride as cofactor. Proteolytic cleavage by ADAM17 generates a secreted form. Also cleaved by serine proteases: TMPRSS2, TMPRSS11D and HPN/TMPRSS1. In terms of processing, phosphorylated. Phosphorylation at Tyr-781 probably inhibits interaction with AP2M1 and enables interactions with proteins containing SH2 domains. Post-translationally, ubiquitinated. Ubiquitinated on Lys-788 via 'Lys-48'-linked ubiquitin. 'Lys-48'-linked deubiquitinated by USP50 on the Lys-788; leading to its stabilization. In terms of tissue distribution, expressed in heart, kidney and forebrain (at protein level). Expressed in the small intestine, with expression in the intestinal brush border (at protein level). Ubiquitously expressed, with highest levels in ileum, kidney and lung. In lung, expressed on vascular endothelial and airway epithelial cells. Also expressed at high levels in lung secretory club and goblet cells as well as in alveolar type 2 cells.

It localises to the secreted. It is found in the cell membrane. The protein resides in the cytoplasm. Its subcellular location is the cell projection. The protein localises to the cilium. It localises to the apical cell membrane. It catalyses the reaction angiotensin II + H2O = angiotensin-(1-7) + L-phenylalanine. The catalysed reaction is angiotensin I + H2O = angiotensin-(1-9) + L-leucine. The enzyme catalyses bradykinin(1-8) + H2O = bradykinin(1-7) + L-phenylalanine. It carries out the reaction neurotensin + H2O = neurotensin-(1-12) + L-leucine. It catalyses the reaction kinetensin + H2O = kinetensin-(1-8) + L-leucine. The catalysed reaction is dynorphin A-(1-13) + H2O = dynorphin A-(1-12) + L-lysine. The enzyme catalyses apelin-13 + H2O = apelin-12 + L-phenylalanine. It carries out the reaction [Pyr1]apelin-13 + H2O = [Pyr1]apelin-12 + L-phenylalanine. It catalyses the reaction apelin-17 + H2O = apelin-16 + L-phenylalanine. Functionally, essential counter-regulatory carboxypeptidase of the renin-angiotensin hormone system that is a critical regulator of blood volume, systemic vascular resistance, and thus cardiovascular homeostasis. Converts angiotensin I to angiotensin 1-9, a nine-amino acid peptide with anti-hypertrophic effects in cardiomyocytes, and angiotensin II to angiotensin 1-7, which then acts as a beneficial vasodilator and anti-proliferation agent, counterbalancing the actions of the vasoconstrictor angiotensin II. Also removes the C-terminal residue from three other vasoactive peptides, neurotensin, kinetensin, and des-Arg bradykinin, but is not active on bradykinin. Also cleaves other biological peptides, such as apelins, casomorphins and dynorphin A. By cleavage of angiotensin II, may be an important regulator of heart function. By cleavage of angiotensin II, may also have a protective role in acute lung injury. Plays an important role in amino acid transport by acting as binding partner of amino acid transporter SLC6A19, regulating its trafficking on the cell surface and its activity. The polypeptide is Angiotensin-converting enzyme 2 (Ace2) (Mus musculus (Mouse)).